Consider the following 414-residue polypeptide: Esterase FrsA (414 aa).

This sequence belongs to the FrsA family.

The catalysed reaction is a carboxylic ester + H2O = an alcohol + a carboxylate + H(+). Its function is as follows. Catalyzes the hydrolysis of esters. The chain is Esterase FrsA from Escherichia coli O45:K1 (strain S88 / ExPEC).